The sequence spans 71 residues: Large ribosomal subunit protein bL32c (71 aa).

A disordered region spans residues 1–24 (MAVPKKRTSRSKKKIRKNVRKGKK).

Belongs to the bacterial ribosomal protein bL32 family.

It is found in the plastid. The protein localises to the chloroplast. In Pinus koraiensis (Korean pine), this protein is Large ribosomal subunit protein bL32c.